We begin with the raw amino-acid sequence, 760 residues long: Histone-lysine N-methyltransferase EZH2 (760 aa).

Disordered regions lie at residues 208–231 and 356–444; these read KDDA…SKKF and PERA…PENV. Basic residues predominate over residues 361-373; it reads TPSKRSTGRRRGR. Over residues 375-388 the composition is skewed to polar residues; the sequence is PNSNSRPSTPTVNS. A compositionally biased stretch (basic and acidic residues) spans 389 to 400; that stretch reads ETKDTDSDREGG. One can recognise a CXC domain in the interval 517 to 619; it reads CRKIQLKKDG…SKNVSCKNCS (103 aa). Residues 626 to 741 enclose the SET domain; it reads KHLLLAPSDV…TGEELFFDYR (116 aa).

Belongs to the class V-like SAM-binding methyltransferase superfamily. Histone-lysine methyltransferase family. EZ subfamily. In terms of assembly, component of the prc2/eed-ezh2 complex.

It is found in the nucleus. The enzyme catalyses L-lysyl(27)-[histone H3] + 3 S-adenosyl-L-methionine = N(6),N(6),N(6)-trimethyl-L-lysyl(27)-[histone H3] + 3 S-adenosyl-L-homocysteine + 3 H(+). Functionally, polycomb group (PcG) protein. Catalytic subunit of the prc2/eed-ezh2 complex, which methylates 'Lys-9' and 'Lys-27' of histone H3, leading to transcriptional repression of the affected target gene. May regulate the circadian clock via histone methylation at the promoter of the circadian genes. This is Histone-lysine N-methyltransferase EZH2 (ezh2) from Danio rerio (Zebrafish).